The chain runs to 659 residues: Threonine--tRNA ligase (659 aa).

The TGS domain maps to 7 to 70; the sequence is DSELIKLTLP…QQDGAIEIVT (64 aa). The tract at residues 253-555 is catalytic; that stretch reads DHRKLGSELE…LIENFAGNFP (303 aa). The Zn(2+) site is built by Cys351, His402, and His532.

The protein belongs to the class-II aminoacyl-tRNA synthetase family. As to quaternary structure, homodimer. It depends on Zn(2+) as a cofactor.

It localises to the cytoplasm. The catalysed reaction is tRNA(Thr) + L-threonine + ATP = L-threonyl-tRNA(Thr) + AMP + diphosphate + H(+). Catalyzes the attachment of threonine to tRNA(Thr) in a two-step reaction: L-threonine is first activated by ATP to form Thr-AMP and then transferred to the acceptor end of tRNA(Thr). Also edits incorrectly charged L-seryl-tRNA(Thr). The protein is Threonine--tRNA ligase of Chloroherpeton thalassium (strain ATCC 35110 / GB-78).